We begin with the raw amino-acid sequence, 282 residues long: 3-methyl-2-oxobutanoate hydroxymethyltransferase (282 aa).

Mg(2+) contacts are provided by aspartate 63 and aspartate 102. Residues 63-64 (DS), aspartate 102, and lysine 132 contribute to the 3-methyl-2-oxobutanoate site. Glutamate 134 contacts Mg(2+). Glutamate 200 (proton acceptor) is an active-site residue.

This sequence belongs to the PanB family. As to quaternary structure, homodecamer; pentamer of dimers. Requires Mg(2+) as cofactor.

It is found in the cytoplasm. It carries out the reaction 3-methyl-2-oxobutanoate + (6R)-5,10-methylene-5,6,7,8-tetrahydrofolate + H2O = 2-dehydropantoate + (6S)-5,6,7,8-tetrahydrofolate. It participates in cofactor biosynthesis; (R)-pantothenate biosynthesis; (R)-pantoate from 3-methyl-2-oxobutanoate: step 1/2. Its function is as follows. Catalyzes the reversible reaction in which hydroxymethyl group from 5,10-methylenetetrahydrofolate is transferred onto alpha-ketoisovalerate to form ketopantoate. This Mycobacterium sp. (strain JLS) protein is 3-methyl-2-oxobutanoate hydroxymethyltransferase.